The following is a 276-amino-acid chain: Thiazole synthase (276 aa).

Lys-117 acts as the Schiff-base intermediate with DXP in catalysis. Residues Gly-178, 204–205 (AG), and 226–227 (NT) contribute to the 1-deoxy-D-xylulose 5-phosphate site.

This sequence belongs to the ThiG family. As to quaternary structure, homotetramer. Forms heterodimers with either ThiH or ThiS.

Its subcellular location is the plastid. It localises to the chloroplast. It catalyses the reaction [ThiS sulfur-carrier protein]-C-terminal-Gly-aminoethanethioate + 2-iminoacetate + 1-deoxy-D-xylulose 5-phosphate = [ThiS sulfur-carrier protein]-C-terminal Gly-Gly + 2-[(2R,5Z)-2-carboxy-4-methylthiazol-5(2H)-ylidene]ethyl phosphate + 2 H2O + H(+). It functions in the pathway cofactor biosynthesis; thiamine diphosphate biosynthesis. In terms of biological role, catalyzes the rearrangement of 1-deoxy-D-xylulose 5-phosphate (DXP) to produce the thiazole phosphate moiety of thiamine. Sulfur is provided by the thiocarboxylate moiety of the carrier protein ThiS. In vitro, sulfur can be provided by H(2)S. This is Thiazole synthase from Gracilaria tenuistipitata var. liui (Red alga).